A 209-amino-acid polypeptide reads, in one-letter code: Glutathione S-transferase 1-1 (209 aa).

Residues 1–81 (MADFYYLPGS…YLVEKYGKTD (81 aa)) form the GST N-terminal domain. Residues serine 10, 51-53 (HTI), and 65-67 (ESR) contribute to the glutathione site. In terms of domain architecture, GST C-terminal spans 87–209 (CPKKRAVINQ…GCLEFKKYFE (123 aa)).

This sequence belongs to the GST superfamily. Theta family. Homodimer.

It catalyses the reaction RX + glutathione = an S-substituted glutathione + a halide anion + H(+). The catalysed reaction is 1,1,1-trichloro-2,2-bis(4-chlorophenyl)ethane = 1,1-dichloro-2,2-bis(4-chlorophenyl)ethylene + chloride + H(+). In terms of biological role, conjugation of reduced glutathione to a wide number of exogenous and endogenous hydrophobic electrophiles. Has DDT dehydrochlorinase activity. This Drosophila simulans (Fruit fly) protein is Glutathione S-transferase 1-1 (GstD1).